Consider the following 559-residue polypeptide: Neutral amino acid transporter 9 (559 aa).

The Cytoplasmic segment spans residues 1–118; that stretch reads MANVDSDSRH…YTEGYRKNTS (118 aa). A helical transmembrane segment spans residues 119 to 139; sequence LVTIFMIWNTMMGTSILSIPW. The interval 128–133 is important for arginine binding and amino acid transport; that stretch reads TMMGTS. An arginine-binding site is contributed by serine 133. The Lumenal segment spans residues 140-145; that stretch reads GIKQAG. Residues 146 to 166 form a helical membrane-spanning segment; that stretch reads FTTGMCVIVLMGLLTLYCCYR. Residues 167–197 lie on the Cytoplasmic side of the membrane; sequence VVKSRSMIVTSDTTTWEYPDVCKHYFGSFGQ. A helical transmembrane segment spans residues 198 to 224; that stretch reads WSSLLFSLVSLIGAMIVYWVLMSNFLF. Residues 225–281 are Lumenal-facing; it reads NTGKFIFNFIHHINDTDTVLSTNNSSPVICPSAGSGHPDNSSMIFYNSDTEVRLFER. Residues asparagine 238, asparagine 247, and asparagine 264 are each glycosylated (N-linked (GlcNAc...) asparagine). A disulfide bond links cysteine 254 and cysteine 422. The helical transmembrane segment at 282-298 threads the bilayer; sequence WWDKSKTVPFYLIGLLL. Over 299–307 the chain is Cytoplasmic; it reads PLLNFKSPS. The helical transmembrane segment at 308–332 threads the bilayer; sequence FFSKFNILGTVSVLYLIFIVTLKAI. Topologically, residues 333-354 are lumenal; sequence RLGFHLEFHWFAPTEFFVPEIR. Residues 355–375 traverse the membrane as a helical segment; it reads AQFPQLTGVLTLAFFIHNCII. The Cytoplasmic portion of the chain corresponds to 376 to 392; sequence TLLKNNKNQENNVRDLC. A helical membrane pass occupies residues 393 to 413; the sequence is IAYMLVTLTYLYIGVLVFASF. At 414–435 the chain is on the lumenal side; sequence PSPPLPKDCIEQNFLDNFPSSD. The chain crosses the membrane as a helical span at residues 436–456; that stretch reads TLSFIARICLLFQMMTVYPLL. The short motif at 442–452 is the CARC motif element; sequence RICLLFQMMTV. Residues 455-461 carry the CRAC motif motif; sequence LLGYLAR. Residues 457–477 are Cytoplasmic-facing; that stretch reads GYLARVQLLGHIFGDIYPSIF. A helical membrane pass occupies residues 478 to 498; it reads HVLILNLIIVGAGVTMACFYP. Residues 499–505 lie on the Lumenal side of the membrane; sequence NIGGIIR. Residues 506 to 526 traverse the membrane as a helical segment; it reads YSGAACGLAFVFIYPSLIYIL. Topologically, residues 527–538 are cytoplasmic; it reads SQHQEERLTWPK. The helical transmembrane segment at 539-559 threads the bilayer; the sequence is LVFHIIIIILGLANLIAQFFM.

It belongs to the amino acid/polyamine transporter 2 family. SLC38A9 subfamily. Associated component of the Ragulator complex (composed of LAMTOR1, LAMTOR2, LAMTOR3, LAMTOR4 and LAMTOR5). Associated component of the Rag GTPases heterodimers (composed of RRAGA, RRAGB, RRAGC and RRAGD); this interaction is independent of the Ragulator complex but depends on the nucleotide loading state of the Rag GTPase heterodimer. Interacts with TM4SF5. Interacts with NPC1; this interaction inhibits cholesterol-mediated mTORC1 activation via its sterol transport activity. Post-translationally, glycosylated.

The protein resides in the lysosome membrane. The protein localises to the late endosome membrane. The catalysed reaction is L-leucine(in) = L-leucine(out). It catalyses the reaction L-tyrosine(in) = L-tyrosine(out). It carries out the reaction L-glutamine(out) = L-glutamine(in). The enzyme catalyses L-asparagine(out) = L-asparagine(in). Functionally, lysosomal amino acid transporter involved in the activation of mTORC1 in response to amino acid levels. Probably acts as an amino acid sensor of the Rag GTPases and Ragulator complexes, 2 complexes involved in amino acid sensing and activation of mTORC1, a signaling complex promoting cell growth in response to growth factors, energy levels, and amino acids. Following activation by amino acids, the Ragulator and Rag GTPases function as a scaffold recruiting mTORC1 to lysosomes where it is in turn activated. SLC38A9 mediates transport of amino acids with low capacity and specificity with a slight preference for polar amino acids. Acts as an arginine sensor. Following activation by arginine binding, mediates transport of L-glutamine, leucine and tyrosine with high efficiency, and is required for the efficient utilization of these amino acids after lysosomal protein degradation. However, the transport mechanism is not well defined and the role of sodium is not clear. Can disassemble the lysosomal folliculin complex (LFC), and thereby triggers GAP activity of FLCN:FNIP2 toward RRAGC. Acts as an cholesterol sensor that conveys increases in lysosomal cholesterol, leading to lysosomal recruitment and activation of mTORC1 via the Rag GTPases. Guanine exchange factor (GEF) that, upon arginine binding, stimulates GDP release from RRAGA and therefore activates the Rag GTPase heterodimer and the mTORC1 pathway in response to nutrient sufficiency. The chain is Neutral amino acid transporter 9 from Rattus norvegicus (Rat).